The sequence spans 76 residues: Kappa-actitoxin-Avd4a (76 aa).

The N-terminal stretch at 1-19 is a signal peptide; sequence MNKALFLCLVVLCAAVVFA. Positions 20–31 are excised as a propeptide; the sequence is AEDLQKAKHAPF. Intrachain disulfides connect cysteine 37–cysteine 72, cysteine 39–cysteine 65, and cysteine 55–cysteine 73.

It belongs to the sea anemone type 3 (BDS) potassium channel toxin family. In terms of tissue distribution, highly expressed in the ectodermal tissue from the distal and proximal tentacles, body wall, and oral disk.

Its subcellular location is the secreted. The protein localises to the nematocyst. In terms of biological role, acts as a gating modifier on both Kv and Nav ion channels, and also acts on blood pressure. Voltage-dependently inhibits voltage-gated potassium channels Kv3 (Kv3.1/KCNC1, Kv3.2/KCNC2 and Kv3.4/KCNC4) and slows inactivation of the voltage-gated sodium channel Nav1.7/SCN9A. Inhibits all Kv3.1, Kv3.2 and Kv3.4 by about 50% when tested at a voltage of +40 mV (45%, 48% and 56%, respectively). May act by binding residues in voltage-sensing domains S3b and S4 of Kv3. On sodium channels, tests have been done on human Nav1.7/SCN9A (expressed in HEK293 cells) (EC(50)=3 nM) and rat SCG neurons that mostly carry Nav1.7 channels (EC(50)=300 nM). This toxin also reduces blood pressure. The chain is Kappa-actitoxin-Avd4a from Anemonia viridis (Snakelocks anemone).